The primary structure comprises 345 residues: NADPH dehydrogenase (345 aa).

23-26 (SPMC) is an FMN binding site. Tyrosine 28 provides a ligand contact to substrate. Residues alanine 60 and glutamine 102 each coordinate FMN. A substrate-binding site is contributed by 164 to 167 (HGAH). Residues arginine 215 and 307–308 (GR) contribute to the FMN site.

This sequence belongs to the NADH:flavin oxidoreductase/NADH oxidase family. NamA subfamily. Homotetramer. FMN is required as a cofactor.

The enzyme catalyses A + NADPH + H(+) = AH2 + NADP(+). Catalyzes the reduction of the double bond of an array of alpha,beta-unsaturated aldehydes and ketones. It also reduces the nitro group of nitroester and nitroaromatic compounds. It could have a role in detoxification processes. The polypeptide is NADPH dehydrogenase (Bacillus cereus (strain ATCC 10987 / NRS 248)).